The chain runs to 169 residues: Shikimate kinase (169 aa).

An ATP-binding site is contributed by 12–17 (GAGKST). Serine 16 lines the Mg(2+) pocket. Residues aspartate 34, arginine 58, and glycine 80 each contribute to the substrate site. Residue arginine 117 participates in ATP binding. Arginine 136 is a binding site for substrate.

This sequence belongs to the shikimate kinase family. Monomer. It depends on Mg(2+) as a cofactor.

Its subcellular location is the cytoplasm. The catalysed reaction is shikimate + ATP = 3-phosphoshikimate + ADP + H(+). It functions in the pathway metabolic intermediate biosynthesis; chorismate biosynthesis; chorismate from D-erythrose 4-phosphate and phosphoenolpyruvate: step 5/7. Functionally, catalyzes the specific phosphorylation of the 3-hydroxyl group of shikimic acid using ATP as a cosubstrate. This is Shikimate kinase from Rhodococcus erythropolis (strain PR4 / NBRC 100887).